The sequence spans 218 residues: Cytochrome b6 (218 aa).

Residues 35 to 55 (IFYCLGGITLVCFLIQFATGF) traverse the membrane as a helical segment. Cysteine 38 serves as a coordination point for heme c. Residues histidine 89 and histidine 103 each contribute to the heme b site. Helical transmembrane passes span 93–113 (ASMM…TGGF), 119–139 (LTWI…VTGY), and 189–209 (LHTF…FLMI). 2 residues coordinate heme b: histidine 190 and histidine 205.

Belongs to the cytochrome b family. PetB subfamily. In terms of assembly, the 4 large subunits of the cytochrome b6-f complex are cytochrome b6, subunit IV (17 kDa polypeptide, PetD), cytochrome f and the Rieske protein, while the 4 small subunits are PetG, PetL, PetM and PetN. The complex functions as a dimer. It depends on heme b as a cofactor. Heme c serves as cofactor.

Its subcellular location is the cellular thylakoid membrane. Component of the cytochrome b6-f complex, which mediates electron transfer between photosystem II (PSII) and photosystem I (PSI), cyclic electron flow around PSI, and state transitions. This chain is Cytochrome b6, found in Prochlorococcus marinus (strain NATL1A).